A 101-amino-acid polypeptide reads, in one-letter code: MKLAIIGGYNFERHSKSMGKLKNIELRFHDGVPKKNNKKVLENLIKDTDCVIIVQMVCSHSSMWDAKDVARKYNKKIYYSQAKGLASVLTMIEKEHGIRTA.

The protein belongs to the UPF0751 family.

This Desulfitobacterium hafniense (strain Y51) protein is UPF0751 protein DSY3086.